Reading from the N-terminus, the 468-residue chain is Argininosuccinate lyase (468 aa).

The protein belongs to the lyase 1 family. Argininosuccinate lyase subfamily.

It is found in the cytoplasm. It carries out the reaction 2-(N(omega)-L-arginino)succinate = fumarate + L-arginine. It participates in amino-acid biosynthesis; L-arginine biosynthesis; L-arginine from L-ornithine and carbamoyl phosphate: step 3/3. This Gloeobacter violaceus (strain ATCC 29082 / PCC 7421) protein is Argininosuccinate lyase.